Here is a 533-residue protein sequence, read N- to C-terminus: Peptidyl-prolyl cis-trans isomerase-like 2 (533 aa).

Residues 38–111 enclose the U-box domain; the sequence is KRLPFYCCSL…DEYFCPVTYK (74 aa). One can recognise a PPIase cyclophilin-type domain in the interval 284-438; the sequence is KKSYARIITN…REIKIKQIQM (155 aa). Positions 443-519 form a coiled coil; the sequence is FEEYQRRLKN…SNEGEELQKK (77 aa). Over residues 454–477 the composition is skewed to basic and acidic residues; the sequence is LTHEANAERENEEMRKRREKEEKM. The segment at 454–533 is disordered; that stretch reads LTHEANAERE…KTTFGNFDNF (80 aa). Positions 523–533 are enriched in polar residues; that stretch reads TKTTFGNFDNF.

The protein belongs to the cyclophilin-type PPIase family. PPIL2 subfamily.

It is found in the nucleus. It catalyses the reaction [protein]-peptidylproline (omega=180) = [protein]-peptidylproline (omega=0). The enzyme catalyses S-ubiquitinyl-[E2 ubiquitin-conjugating enzyme]-L-cysteine + [acceptor protein]-L-lysine = [E2 ubiquitin-conjugating enzyme]-L-cysteine + N(6)-ubiquitinyl-[acceptor protein]-L-lysine.. It functions in the pathway protein modification; protein ubiquitination. In terms of biological role, may catalyze the cis-trans isomerization of proline imidic peptide bonds in oligopeptides thereby assisting the folding of proteins. May also function as a chaperone, playing a role in intracellular transport of proteins. May also have a protein ubiquitin ligase activity acting as an E3 ubiquitin protein ligase or as a ubiquitin-ubiquitin ligase promoting elongation of ubiquitin chains on proteins. The polypeptide is Peptidyl-prolyl cis-trans isomerase-like 2 (cyp14) (Rhizopus delemar (strain RA 99-880 / ATCC MYA-4621 / FGSC 9543 / NRRL 43880) (Mucormycosis agent)).